The chain runs to 371 residues: Phospho-N-acetylmuramoyl-pentapeptide-transferase (371 aa).

The next 9 membrane-spanning stretches (helical) occupy residues 19-39 (LYWL…IYSG), 48-68 (IVAP…WAVP), 95-115 (TMGG…WVAA), 119-139 (NLLE…VGWF), 155-175 (AKLR…WLFL), 180-200 (ISGL…FLAI), 227-247 (AIAF…LMIF), 284-304 (AVGL…LFLV), and 349-369 (VVST…GLNA).

The protein belongs to the glycosyltransferase 4 family. MraY subfamily. Requires Mg(2+) as cofactor.

It is found in the cell inner membrane. The enzyme catalyses UDP-N-acetyl-alpha-D-muramoyl-L-alanyl-gamma-D-glutamyl-meso-2,6-diaminopimeloyl-D-alanyl-D-alanine + di-trans,octa-cis-undecaprenyl phosphate = di-trans,octa-cis-undecaprenyl diphospho-N-acetyl-alpha-D-muramoyl-L-alanyl-D-glutamyl-meso-2,6-diaminopimeloyl-D-alanyl-D-alanine + UMP. The protein operates within cell wall biogenesis; peptidoglycan biosynthesis. In terms of biological role, catalyzes the initial step of the lipid cycle reactions in the biosynthesis of the cell wall peptidoglycan: transfers peptidoglycan precursor phospho-MurNAc-pentapeptide from UDP-MurNAc-pentapeptide onto the lipid carrier undecaprenyl phosphate, yielding undecaprenyl-pyrophosphoryl-MurNAc-pentapeptide, known as lipid I. The protein is Phospho-N-acetylmuramoyl-pentapeptide-transferase of Acaryochloris marina (strain MBIC 11017).